A 261-amino-acid polypeptide reads, in one-letter code: Imidazole glycerol phosphate synthase subunit HisF (261 aa).

Catalysis depends on residues D16 and D135.

This sequence belongs to the HisA/HisF family. As to quaternary structure, heterodimer of HisH and HisF.

It localises to the cytoplasm. The catalysed reaction is 5-[(5-phospho-1-deoxy-D-ribulos-1-ylimino)methylamino]-1-(5-phospho-beta-D-ribosyl)imidazole-4-carboxamide + L-glutamine = D-erythro-1-(imidazol-4-yl)glycerol 3-phosphate + 5-amino-1-(5-phospho-beta-D-ribosyl)imidazole-4-carboxamide + L-glutamate + H(+). It functions in the pathway amino-acid biosynthesis; L-histidine biosynthesis; L-histidine from 5-phospho-alpha-D-ribose 1-diphosphate: step 5/9. IGPS catalyzes the conversion of PRFAR and glutamine to IGP, AICAR and glutamate. The HisF subunit catalyzes the cyclization activity that produces IGP and AICAR from PRFAR using the ammonia provided by the HisH subunit. The chain is Imidazole glycerol phosphate synthase subunit HisF from Mycobacterium marinum (strain ATCC BAA-535 / M).